The chain runs to 372 residues: Enolase (372 aa).

His-95 and Glu-104 together coordinate substrate. Glu-147 (proton donor) is an active-site residue. Mg(2+) contacts are provided by Asp-182, Glu-232, and Asp-257. Residues Glu-232 and Asp-257 each coordinate substrate. Lys-282 functions as the Proton acceptor in the catalytic mechanism. Residues Ser-309–Ser-312 and Lys-333 each bind substrate.

This sequence belongs to the enolase family. Homodimer. The cofactor is Mg(2+).

The protein resides in the cytoplasm. It carries out the reaction (2R)-2-phosphoglycerate = phosphoenolpyruvate + H2O. It functions in the pathway carbohydrate degradation; glycolysis; pyruvate from D-glyceraldehyde 3-phosphate: step 4/5. The chain is Enolase (ENO) from Chlamydomonas reinhardtii (Chlamydomonas smithii).